We begin with the raw amino-acid sequence, 129 residues long: Small ribosomal subunit protein uS11 (129 aa).

Belongs to the universal ribosomal protein uS11 family. In terms of assembly, part of the 30S ribosomal subunit. Interacts with proteins S7 and S18. Binds to IF-3.

Its function is as follows. Located on the platform of the 30S subunit, it bridges several disparate RNA helices of the 16S rRNA. Forms part of the Shine-Dalgarno cleft in the 70S ribosome. This Listeria innocua serovar 6a (strain ATCC BAA-680 / CLIP 11262) protein is Small ribosomal subunit protein uS11.